The sequence spans 413 residues: Tyrosine--tRNA ligase (413 aa).

A 'HIGH' region motif is present at residues 59–68 (PTAPDIHIGH). The 'KMSKS' region signature appears at 243 to 247 (KMSKS). K246 contacts ATP. The 61-residue stretch at 351–411 (LAIGQLLKQA…GKRRFARVTL (61 aa)) folds into the S4 RNA-binding domain.

It belongs to the class-I aminoacyl-tRNA synthetase family. TyrS type 2 subfamily. As to quaternary structure, homodimer.

It is found in the cytoplasm. It catalyses the reaction tRNA(Tyr) + L-tyrosine + ATP = L-tyrosyl-tRNA(Tyr) + AMP + diphosphate + H(+). Catalyzes the attachment of tyrosine to tRNA(Tyr) in a two-step reaction: tyrosine is first activated by ATP to form Tyr-AMP and then transferred to the acceptor end of tRNA(Tyr). In Burkholderia lata (strain ATCC 17760 / DSM 23089 / LMG 22485 / NCIMB 9086 / R18194 / 383), this protein is Tyrosine--tRNA ligase.